The primary structure comprises 346 residues: Anthocyanidin 3-O-glucosyltransferase 2 (346 aa).

UDP-alpha-D-glucose contacts are provided by Ala221, Gln223, His238, Trp241, Asn242, Ser243, and Glu246. Ala261 contributes to the an anthocyanidin binding site. The UDP-alpha-D-glucose site is built by Glu262 and Gln263.

It belongs to the UDP-glycosyltransferase family. Expressed in cotyledons, roots and leaves.

It carries out the reaction an anthocyanidin + UDP-alpha-D-glucose + H(+) = an anthocyanidin 3-O-beta-D-glucoside + UDP. It functions in the pathway pigment biosynthesis; anthocyanin biosynthesis. In terms of biological role, in the presence of other necessary color factors, this glycosylation reaction allows the accumulation of anthocyanin pigments. The sequence is that of Anthocyanidin 3-O-glucosyltransferase 2 (GT2) from Manihot esculenta (Cassava).